A 616-amino-acid polypeptide reads, in one-letter code: FAD-linked oxidoreductase cheF (616 aa).

Residues 160–344 (NQGLVSPWYV…LSMTVRVEPA (185 aa)) enclose the FAD-binding PCMH-type domain.

This sequence belongs to the oxygen-dependent FAD-linked oxidoreductase family. FAD is required as a cofactor.

The protein operates within secondary metabolite biosynthesis. Its function is as follows. FAD-linked oxidoreductase; part of the gene cluster that mediates the biosynthesis of chaetoglobosin A which has a unique inhibitory activity against actin polymerization in mammalian cells. Chaetoglobosin A and its intermediates are involved in the morphological differentiation of C.globosum. The first step of the pathway is the synthesis of prochaetoglobosin I via condensation of one acetyl-CoA, 8 malonyl-CoA, and a L-tryptophan molecule by the PKS-NRPS hybrid synthetase cheA, followed by reduction of backbone double bond to install desired geometry by the enoyl reductase cheB. Further multiple oxidation steps performed by the cytochrome P450 monooxygenases cheE and cheG, as well as by the FAD-linked oxidoreductase cheF, lead to the formation of chaetoglobosin A. Depending on the order of action of these reductases, distinct intermediates can be identified. Within the pathway, the cytochrome P450 monooxygenase cheE catalyzes a stereospecific epoxidation on prochaetoglobosin I, cytoglobosin D, and chaetoglobosin J intermediates. The FAD-linked oxidoreductase cheF performs dehydrogenation of the C-20 hydroxyl groups in the 20-dihyrochaetoglobosin A and cytoglobosin D intermediates. Finally, the cytochrome P450 monooxygenase cheG can catalyze the stereospecific dihydroxylation of prochaetoglobosin I and prochaetoglobosin IV at C-19 and C-20, respectively. The Diels-Alderase cheD may play a role in the post-PKS-NRPS biosynthetic steps catalyzing Diels-Alder cyclization. This is FAD-linked oxidoreductase cheF from Chaetomium globosum (strain ATCC 6205 / CBS 148.51 / DSM 1962 / NBRC 6347 / NRRL 1970) (Soil fungus).